A 440-amino-acid chain; its full sequence is MKKLLLAASIIYFASVSLAEEKTTPFISNSDTKIKLEGFYLFESGYIKQDHLILFDKNVTDNRKKLGFDTEVAFAATITKTIDDVIAGAKIVLQPTTKAKTTASYNGSHIFIETSYGKVELGSPVDASAQLRVTGNKVTAGTGGWYRYALLDGQYMRYNALKPDFDTSVNFYLESYSNSFDQVNEKTEKARRLNFFTPKMKGFQAGISYTPDTANTGGNKNINNLTLQSSGRNGISASRTGIKTLSIANGEIMTINQNIRDAFSAGLTYEHAISEDADLKLSMTGEYGKPARRLIHAKVDGTTKAIEVLNTYKLSNLKAYNLGAVFTYGNFSCGASYGNLGKSLTAKEYYKVGRNTYYYNGAVAYGQGPIKTSLAYLKTSRYKNTVNAVSLATEYKIMPGLLPYAEISHFQAKGKPVYYPEAPSKTTRGTVGLIGTKLKF.

An N-terminal signal peptide occupies residues 1–19; the sequence is MKKLLLAASIIYFASVSLA.

This is an uncharacterized protein from Rickettsia typhi (strain ATCC VR-144 / Wilmington).